The following is a 993-amino-acid chain: UPF0182 protein Sare_4110 (993 aa).

The next 7 helical transmembrane spans lie at 18-38 (IGVLVGVFVLFTLLGWGVQAW), 61-81 (LLLFVTVGLAMAVVVGGNLWL), 110-130 (LGTWFAVVSVVVGLFAGLSAQ), 171-191 (GVAFTAVVLALIGALAVHYVF), 209-229 (AHLSALVAVFVLLKAVAYVLD), 260-280 (ILAYISVVVAIAVLVFSNAWM), and 283-303 (LVWPGISLALLGVSAVAIGGI). Disordered regions lie at residues 892–937 (QGEK…ADAA) and 974–993 (EQAAGPGSAATPTGSPSPGG). Residues 900-929 (STPPPSGETPAPTPTPTPTPSSPSVTPPPV) are compositionally biased toward pro residues. Residues 976 to 993 (AAGPGSAATPTGSPSPGG) show a composition bias toward low complexity.

It belongs to the UPF0182 family.

The protein localises to the cell membrane. The sequence is that of UPF0182 protein Sare_4110 from Salinispora arenicola (strain CNS-205).